Reading from the N-terminus, the 239-residue chain is Transcriptional activatory protein AadR (239 aa).

27–149 (ICGELGPADH…FATRELSLAQ (123 aa)) provides a ligand contact to a nucleoside 3',5'-cyclic phosphate. The HTH crp-type domain occupies 158–231 (RSAEEKVAAF…PDGVRVLDPK (74 aa)). Residues 191 to 210 (RQDIADFLGLTIETVSRTFT) constitute a DNA-binding region (H-T-H motif).

Transcriptional activator of anaerobic gene expression. For aromatic acid degradation. Also required for the anaerobic degradation of benzoate. This chain is Transcriptional activatory protein AadR (aadR), found in Rhodopseudomonas palustris (strain ATCC BAA-98 / CGA009).